The primary structure comprises 223 residues: Triosephosphate isomerase (223 aa).

Residue 6 to 8 participates in substrate binding; that stretch reads NLK. Histidine 86 acts as the Electrophile in catalysis. Glutamate 151 acts as the Proton acceptor in catalysis. Substrate-binding residues include glycine 157 and serine 187.

The protein belongs to the triosephosphate isomerase family. Homodimer.

Its subcellular location is the cytoplasm. The catalysed reaction is D-glyceraldehyde 3-phosphate = dihydroxyacetone phosphate. The protein operates within carbohydrate biosynthesis; gluconeogenesis. Its pathway is carbohydrate degradation; glycolysis; D-glyceraldehyde 3-phosphate from glycerone phosphate: step 1/1. In terms of biological role, involved in the gluconeogenesis. Catalyzes stereospecifically the conversion of dihydroxyacetone phosphate (DHAP) to D-glyceraldehyde-3-phosphate (G3P). The chain is Triosephosphate isomerase from Campylobacter jejuni subsp. jejuni serotype O:2 (strain ATCC 700819 / NCTC 11168).